The sequence spans 292 residues: 4-hydroxy-tetrahydrodipicolinate synthase (292 aa).

T45 is a binding site for pyruvate. Y133 (proton donor/acceptor) is an active-site residue. Catalysis depends on K161, which acts as the Schiff-base intermediate with substrate. I203 serves as a coordination point for pyruvate.

The protein belongs to the DapA family. In terms of assembly, homodimer.

The protein resides in the cytoplasm. It carries out the reaction L-aspartate 4-semialdehyde + pyruvate = (2S,4S)-4-hydroxy-2,3,4,5-tetrahydrodipicolinate + H2O + H(+). It functions in the pathway amino-acid biosynthesis; L-lysine biosynthesis via DAP pathway; (S)-tetrahydrodipicolinate from L-aspartate: step 3/4. Functionally, catalyzes the condensation of (S)-aspartate-beta-semialdehyde [(S)-ASA] and pyruvate to 4-hydroxy-tetrahydrodipicolinate (HTPA). This is 4-hydroxy-tetrahydrodipicolinate synthase from Pseudomonas syringae pv. syringae (strain B728a).